A 626-amino-acid chain; its full sequence is Glucoamylase (626 aa).

Positions methionine 1–glycine 19 are cleaved as a signal peptide. A propeptide spanning residues leucine 20 to arginine 35 is cleaved from the precursor. Asparagine 106 carries an N-linked (GlcNAc...) asparagine glycan. Tryptophan 155 contacts substrate. An N-linked (GlcNAc...) asparagine glycan is attached at asparagine 206. The active-site Proton acceptor is the aspartate 211. Glutamate 214 acts as the Proton donor in catalysis. N-linked (GlcNAc...) asparagine glycosylation occurs at asparagine 217. One can recognise a CBM20 domain in the interval cysteine 520 to arginine 626.

Belongs to the glycosyl hydrolase 15 family.

The enzyme catalyses Hydrolysis of terminal (1-&gt;4)-linked alpha-D-glucose residues successively from non-reducing ends of the chains with release of beta-D-glucose.. In Neurospora crassa (strain ATCC 24698 / 74-OR23-1A / CBS 708.71 / DSM 1257 / FGSC 987), this protein is Glucoamylase (gla-1).